Reading from the N-terminus, the 290-residue chain is Pyridoxal kinase PdxY (290 aa).

Residues S12 and 47–48 (TQ) contribute to the substrate site. ATP-binding positions include D114, E151, K184, and 211–214 (RPLL). Residue D225 coordinates substrate.

Belongs to the pyridoxine kinase family. PdxY subfamily. As to quaternary structure, homodimer. The cofactor is Mg(2+).

The enzyme catalyses pyridoxal + ATP = pyridoxal 5'-phosphate + ADP + H(+). Its pathway is cofactor metabolism; pyridoxal 5'-phosphate salvage; pyridoxal 5'-phosphate from pyridoxal: step 1/1. Functionally, pyridoxal kinase involved in the salvage pathway of pyridoxal 5'-phosphate (PLP). Catalyzes the phosphorylation of pyridoxal to PLP. In Pseudomonas putida (strain ATCC 700007 / DSM 6899 / JCM 31910 / BCRC 17059 / LMG 24140 / F1), this protein is Pyridoxal kinase PdxY.